Consider the following 514-residue polypeptide: Peptide chain release factor 3 (514 aa).

Positions Lys-8 to His-268 constitute a tr-type G domain. Residues Ser-17 to Thr-24, Asp-85 to His-89, and Asn-139 to Asp-142 each bind GTP.

The protein belongs to the TRAFAC class translation factor GTPase superfamily. Classic translation factor GTPase family. PrfC subfamily.

Its subcellular location is the cytoplasm. Its function is as follows. Increases the formation of ribosomal termination complexes and stimulates activities of RF-1 and RF-2. It binds guanine nucleotides and has strong preference for UGA stop codons. It may interact directly with the ribosome. The stimulation of RF-1 and RF-2 is significantly reduced by GTP and GDP, but not by GMP. This Streptococcus sanguinis (strain SK36) protein is Peptide chain release factor 3.